We begin with the raw amino-acid sequence, 358 residues long: UDP-N-acetylglucosamine--N-acetylmuramyl-(pentapeptide) pyrophosphoryl-undecaprenol N-acetylglucosamine transferase (358 aa).

UDP-N-acetyl-alpha-D-glucosamine is bound by residues Arg-166, Ser-196, and Gln-291.

This sequence belongs to the glycosyltransferase 28 family. MurG subfamily.

The protein localises to the cell membrane. The enzyme catalyses Mur2Ac(oyl-L-Ala-gamma-D-Glu-L-Lys-D-Ala-D-Ala)-di-trans,octa-cis-undecaprenyl diphosphate + UDP-N-acetyl-alpha-D-glucosamine = beta-D-GlcNAc-(1-&gt;4)-Mur2Ac(oyl-L-Ala-gamma-D-Glu-L-Lys-D-Ala-D-Ala)-di-trans,octa-cis-undecaprenyl diphosphate + UDP + H(+). The protein operates within cell wall biogenesis; peptidoglycan biosynthesis. In terms of biological role, cell wall formation. Catalyzes the transfer of a GlcNAc subunit on undecaprenyl-pyrophosphoryl-MurNAc-pentapeptide (lipid intermediate I) to form undecaprenyl-pyrophosphoryl-MurNAc-(pentapeptide)GlcNAc (lipid intermediate II). The chain is UDP-N-acetylglucosamine--N-acetylmuramyl-(pentapeptide) pyrophosphoryl-undecaprenol N-acetylglucosamine transferase from Staphylococcus saprophyticus subsp. saprophyticus (strain ATCC 15305 / DSM 20229 / NCIMB 8711 / NCTC 7292 / S-41).